Here is a 360-residue protein sequence, read N- to C-terminus: Decorin (360 aa).

The N-terminal stretch at M1–A16 is a signal peptide. The propeptide occupies G17–E30. O-linked (Xyl...) (glycosaminoglycan) serine glycosylation occurs at S34. 2 disulfide bridges follow: C55-C61 and C59-C68. LRR repeat units lie at residues D74–I94, T95–I118, S119–L142, K143–I163, T164–L187, K188–I213, T214–I234, T235–I258, S259–L282, I283–I305, S306–V335, and Q336–K360. N212 carries N-linked (GlcNAc...) asparagine glycosylation. N-linked (GlcNAc...) asparagine glycosylation is found at N263 and N304. Cysteines 314 and 347 form a disulfide.

Belongs to the small leucine-rich proteoglycan (SLRP) family. SLRP class I subfamily. Binds to type I and type II collagen, fibronectin and TGF-beta. Forms a ternary complex with MFAP2 and ELN. Interacts with DPT. Post-translationally, the attached glycosaminoglycan chain can be either chondroitin sulfate or dermatan sulfate depending upon the tissue of origin.

The protein localises to the secreted. It is found in the extracellular space. Its subcellular location is the extracellular matrix. Its function is as follows. May affect the rate of fibrils formation. In Equus caballus (Horse), this protein is Decorin (DCN).